A 580-amino-acid chain; its full sequence is ELVRVGHDSLIGEIIRLEGDSATIQVYEETAGLTVNDPVLRTKKPLSCELGPGILGNIFDGIQRPLKTIAIKSRDVYIPRGVSVPALDKDQLWEFQPNKLGVGDNITNGDLYATVFENTLMKHHIALPPGAMGKISYIAPAGQYSLQDTVLELEFQGIKKEFTMLHTWPVRTPRPVASKLAADTPLLTGQRVLDALFPSVLGGTCAIPGAFGCGKTVISQALSKYSNSDTVVYVGCGERGNEMAEVLMDFPQLTMTLPDGREESVMKRTTLVANTSNMPVAAREASIYTGITIAEYFRDMGYNVSMMADSTSRWAEALREISGRLAEMPADSGYPAYLASRLASFYERAGKVQCLGSPDRTGSVTIVGAVSPPGGDFSDPVTSATLSIVQVFWGLDKKLAQRKHFPSVNWLISYSKYSTALEGYYEKFDPGFIDMRTKAREVLQREDDLNEIVQLVGKDALGESDKITLETAKLLREDYLAQNAFTPYDKYCPFYKSVWMMRNIIHFNQLANQAVERAANADGHKITYAVVKSRMGDLFYRLVSQKFEDPAEGEDVLVAKFQKLYDDLTAGFRNLEDEAR.

209-216 (GAFGCGKT) contributes to the ATP binding site.

Belongs to the ATPase alpha/beta chains family. V-ATPase is a heteromultimeric enzyme composed of a peripheral catalytic V1 complex (main components: subunits A, B, C, D, E, and F) attached to an integral membrane V0 proton pore complex (main component: the proteolipid protein).

It carries out the reaction ATP + H2O + 4 H(+)(in) = ADP + phosphate + 5 H(+)(out). Functionally, catalytic subunit of the peripheral V1 complex of vacuolar ATPase. V-ATPase vacuolar ATPase is responsible for acidifying a variety of intracellular compartments in eukaryotic cells. This is V-type proton ATPase catalytic subunit A from Hordeum vulgare (Barley).